Reading from the N-terminus, the 171-residue chain is Photosystem I assembly protein Ycf3 (171 aa).

3 TPR repeats span residues 35 to 68 (AFTYYRDGMSAQSEGEYAEALQNYYKAMRLEIDP), 72 to 105 (SYILYNIGLIHTSNGEHAKALEYYFQALERNPSL), and 120 to 153 (GEQAIQQGDPGTSEIWFDKAAEYWKQAIALAPNN).

The protein belongs to the Ycf3 family.

It localises to the plastid. It is found in the chloroplast thylakoid membrane. Functionally, essential for the assembly of the photosystem I (PSI) complex. May act as a chaperone-like factor to guide the assembly of the PSI subunits. The sequence is that of Photosystem I assembly protein Ycf3 from Psilotum nudum (Whisk fern).